A 206-amino-acid polypeptide reads, in one-letter code: Macrophage immunometabolism regulator (206 aa).

Methionine 1 is subject to N-acetylmethionine. Positions 1–41 (MEVDINGESRSTLTTLPFPGAEANSPGKAEAEKPRCSSTPC) are disordered. 3 positions are modified to phosphoserine: serine 25, serine 140, and serine 167.

Belongs to the UNC119-binding protein family. As to quaternary structure, interacts with UNC119 and UNC119B; interaction preferentially takes place when UNC119 and UNC119B are unliganded with myristoylated proteins. Post-translationally, phosphorylated. In terms of tissue distribution, high expression in normal macrophages, monocytes, and cultured rheumatoid arthritis synovial fibroblasts (RASFs), with lower expression in B- and T-cells, and little to no expression in other tissues and cell lines.

Its subcellular location is the cytoplasm. It localises to the cell projection. The protein localises to the cilium. In terms of biological role, regulates the macrophage function, by enhancing the resolution of inflammation and wound repair functions mediated by M2 macrophages. The regulation of macrophage function is, due at least in part, to its ability to inhibit glycolysis. May also play a role in trafficking of proteins via its interaction with UNC119 and UNC119B cargo adapters: may help the release of UNC119 and UNC119B cargo or the recycling of UNC119 and UNC119B. May play a role in ciliary membrane localization via its interaction with UNC119B and protein transport into photoreceptor cells. The polypeptide is Macrophage immunometabolism regulator (Homo sapiens (Human)).